Consider the following 543-residue polypeptide: MKQTKYIFVTGGVLSSLGKGIAAASIATLLKNSGLKVSILKADPYINVDPGTMSPFEHGEVFVTDDGAETDLDLGHYERFLDESLSQDNNFTTGRVYQSVIEKERRGEYLGKTIQVIPHIVGEIKDRIKKAGEGKDILIVEIGGTVGDIEGLPFLEAIRALRLEVGKNNAMNIHLTLVPFIKAAGELKTKPTQHSVGELRRIGISPDMIICRSEKALDRDLKDKIAISCGVEKNCVIESVDAASIYQIPLNFLKQDILSPIAEILDLKNLKPNMENWDSLVKRVIAPSNEVKIAFVGKYVDLKESYKSLTEAIIHAGAALDTKVELKWVDSEKLENMESSEVFKDVSGILVAGGFGYRGVEGKIKAIQYARENKIPFLGICLGMQLALVEFARNVLKLKDANSSEFNEKCQNPVVYLIDEFMDTNGEKQIRTAKTPLGGTMRLGAYKCDIKEKSLLAKVYNEVKSVKERHRHRYEANPKYRADFEKHGLIVSGESKGLIEAVELNCHPFFLAVQFHPEFTSRLEHVNPVICSFIKAAINYEDN.

Residues 1–267 (MKQTKYIFVT…LSPIAEILDL (267 aa)) are amidoligase domain. Residue S15 participates in CTP binding. Residue S15 coordinates UTP. ATP is bound by residues 16–21 (SLGKGI) and D73. Residues D73 and E141 each coordinate Mg(2+). Residues 148–150 (DIE), 188–193 (KTKPTQ), and K224 contribute to the CTP site. UTP is bound by residues 188-193 (KTKPTQ) and K224. Residues 292-543 (KIAFVGKYVD…IKAAINYEDN (252 aa)) enclose the Glutamine amidotransferase type-1 domain. Residue G354 coordinates L-glutamine. The active-site Nucleophile; for glutamine hydrolysis is the C381. L-glutamine is bound by residues 382 to 385 (LGMQ), E405, and R473. Residues H516 and E518 contribute to the active site.

The protein belongs to the CTP synthase family. As to quaternary structure, homotetramer.

It carries out the reaction UTP + L-glutamine + ATP + H2O = CTP + L-glutamate + ADP + phosphate + 2 H(+). The catalysed reaction is L-glutamine + H2O = L-glutamate + NH4(+). The enzyme catalyses UTP + NH4(+) + ATP = CTP + ADP + phosphate + 2 H(+). It functions in the pathway pyrimidine metabolism; CTP biosynthesis via de novo pathway; CTP from UDP: step 2/2. Allosterically activated by GTP, when glutamine is the substrate; GTP has no effect on the reaction when ammonia is the substrate. The allosteric effector GTP functions by stabilizing the protein conformation that binds the tetrahedral intermediate(s) formed during glutamine hydrolysis. Inhibited by the product CTP, via allosteric rather than competitive inhibition. Functionally, catalyzes the ATP-dependent amination of UTP to CTP with either L-glutamine or ammonia as the source of nitrogen. Regulates intracellular CTP levels through interactions with the four ribonucleotide triphosphates. The protein is CTP synthase of Campylobacter jejuni subsp. jejuni serotype O:23/36 (strain 81-176).